A 464-amino-acid chain; its full sequence is E3 ubiquitin-protein ligase TRAIP (464 aa).

Residues 7-50 (CTICSDFFDNARDVAAITCGHTFHQECLLQWFHSAPHRTCPQCR) form an RING-type; atypical zinc finger. 2 coiled-coil regions span residues 142 to 186 (LDKQ…MIRD) and 236 to 277 (AQKA…LQKT). Positions 439-464 (KRKKVSRPTACTSSLANQPRLEDFLK) are disordered. The PIP-box motif lies at 456–464 (QPRLEDFLK).

The protein belongs to the TRAIP family.

The protein localises to the nucleus. It localises to the nucleoplasm. Its subcellular location is the nucleolus. It is found in the chromosome. The protein resides in the cytoplasm. The enzyme catalyses S-ubiquitinyl-[E2 ubiquitin-conjugating enzyme]-L-cysteine + [acceptor protein]-L-lysine = [E2 ubiquitin-conjugating enzyme]-L-cysteine + N(6)-ubiquitinyl-[acceptor protein]-L-lysine.. The protein operates within protein modification; protein ubiquitination. Its function is as follows. E3 ubiquitin ligase required to protect genome stability in response to replication stress. Acts as a key regulator of interstrand cross-link repair, which takes place when both strands of duplex DNA are covalently tethered together, thereby blocking replication and transcription. Controls the choice between the two pathways of replication-coupled interstrand-cross-link repair by mediating ubiquitination of mcm7 subunit of the CMG helicase complex. Short ubiquitin chains on mcm7 promote recruitment of DNA glycosylase neil3. If the interstrand cross-link cannot be cleaved by neil3, the ubiquitin chains continue to grow on mcm7, promoting the unloading of the CMG helicase complex by the vcp/p97 ATPase, enabling the Fanconi anemia DNA repair pathway. Only catalyzes ubiquitination of mcm7 when forks converge. Also involved in the repair of covalent DNA-protein cross-links (DPCs) during DNA synthesis: promotes ubiquitination of DPCs, leading to their degradation by the proteasome. Also acts as a negative regulator of innate immune signaling by inhibiting activation of NF-kappa-B mediated by TNF. This Xenopus laevis (African clawed frog) protein is E3 ubiquitin-protein ligase TRAIP.